Here is a 254-residue protein sequence, read N- to C-terminus: MLQTEMKVIQQTEIADKVYELILTGECVAGMSPGQFLMLKPSRSDLLMRRPISICSYDKTAKTCILLYRVEGDGTRDFSKLSEGDTIDVLGPLGKGFDIDTTPAPKTALLIGGGIGVPPMYQLGKELAEKGVQVMFVNGFQSAKDSFYAQEMAEYGTVHIATVDGSLGTQGFVTDITKNFPEEPDVIYSCGPKAMLQAVKASFPETKTYLSLEERMACGIGACYACVCPKADDTNKQFKVCEDGPVFRADEVKL.

Residues 1–99 enclose the FAD-binding FR-type domain; sequence MLQTEMKVIQ…LGPLGKGFDI (99 aa). FAD is bound by residues 50–53, 67–69, and 74–75; these read RPIS, LYR, and GT. Residues Cys-218, Cys-223, Cys-226, and Cys-241 each contribute to the [2Fe-2S] cluster site.

The protein belongs to the PyrK family. Heterotetramer of 2 PyrK and 2 PyrD type B subunits. [2Fe-2S] cluster is required as a cofactor. FAD serves as cofactor.

The protein operates within pyrimidine metabolism; UMP biosynthesis via de novo pathway; orotate from (S)-dihydroorotate (NAD(+) route): step 1/1. In terms of biological role, responsible for channeling the electrons from the oxidation of dihydroorotate from the FMN redox center in the PyrD type B subunit to the ultimate electron acceptor NAD(+). The protein is Dihydroorotate dehydrogenase B (NAD(+)), electron transfer subunit of Listeria monocytogenes serovar 1/2a (strain ATCC BAA-679 / EGD-e).